The chain runs to 246 residues: ATP synthase subunit b 1 (246 aa).

A helical transmembrane segment spans residues 5-27 (WFTFTAQVINFLVLVGLLRYFLY).

This sequence belongs to the ATPase B chain family. In terms of assembly, F-type ATPases have 2 components, F(1) - the catalytic core - and F(0) - the membrane proton channel. F(1) has five subunits: alpha(3), beta(3), gamma(1), delta(1), epsilon(1). F(0) has three main subunits: a(1), b(2) and c(10-14). The alpha and beta chains form an alternating ring which encloses part of the gamma chain. F(1) is attached to F(0) by a central stalk formed by the gamma and epsilon chains, while a peripheral stalk is formed by the delta and b chains.

Its subcellular location is the cell inner membrane. Functionally, f(1)F(0) ATP synthase produces ATP from ADP in the presence of a proton or sodium gradient. F-type ATPases consist of two structural domains, F(1) containing the extramembraneous catalytic core and F(0) containing the membrane proton channel, linked together by a central stalk and a peripheral stalk. During catalysis, ATP synthesis in the catalytic domain of F(1) is coupled via a rotary mechanism of the central stalk subunits to proton translocation. Component of the F(0) channel, it forms part of the peripheral stalk, linking F(1) to F(0). This Rhodopirellula baltica (strain DSM 10527 / NCIMB 13988 / SH1) protein is ATP synthase subunit b 1.